The chain runs to 40 residues: Dolichyl-diphosphooligosaccharide--protein glycosyltransferase subunit 4 (40 aa).

Topologically, residues 1-4 (MITD) are lumenal. A helical transmembrane segment spans residues 5-25 (VQLAIFSNVLGVFLFLLVVAY). The Cytoplasmic portion of the chain corresponds to 26-40 (HYINANTGKSSPKAK).

It belongs to the OST4 family. As to quaternary structure, component of the oligosaccharyltransferase (OST) complex.

The protein localises to the endoplasmic reticulum membrane. In terms of biological role, subunit of the oligosaccharyl transferase (OST) complex that catalyzes the initial transfer of a defined glycan (Glc(3)Man(9)GlcNAc(2) in eukaryotes) from the lipid carrier dolichol-pyrophosphate to an asparagine residue within an Asn-X-Ser/Thr consensus motif in nascent polypeptide chains, the first step in protein N-glycosylation. N-glycosylation occurs cotranslationally and the complex associates with the Sec61 complex at the channel-forming translocon complex that mediates protein translocation across the endoplasmic reticulum (ER). All subunits are required for a maximal enzyme activity. This Drosophila persimilis (Fruit fly) protein is Dolichyl-diphosphooligosaccharide--protein glycosyltransferase subunit 4.